The following is a 414-amino-acid chain: Cytochrome P450 GfsF (414 aa).

Positions 1–32 (MTDTTLVEAGDPAEDAPEWPMKRDTGCPFDPP) are disordered. Heme b-binding residues include His75, His107, Arg111, Arg303, His361, and Cys363.

It belongs to the cytochrome P450 family. In terms of assembly, monomer. Heme b serves as cofactor.

Its pathway is antibiotic biosynthesis. Its function is as follows. Involved in the synthesis of the 16-membered macrolide antibiotics FD-891 and FD-892. Consecutively catalyzes epoxidation of C8-C9 and then hydroxylation at C10 to convert 25-O-methyl-FD-892 to FD-891. Consecutively catalyzes epoxidation of C8-C9 and then hydroxylation at C10 to convert 8,9-epoxy-FD-892 to 25-O-demethyl-FD-891 as well as converting 25-oxo-FD-892 to 8,9-epoxy-25-oxo-FD-892 and 8,9-epoxy-10-hydroxy-25-oxo-FD-892. In vitro is furnished with P.putida putidaredoxin and putidaredoxin reductase to provide the required two-electron reduction. The chain is Cytochrome P450 GfsF from Streptomyces halstedii.